Reading from the N-terminus, the 942-residue chain is DDB1- and CUL4-associated factor 5 (942 aa).

WD repeat units lie at residues 51 to 91 (GHFG…HSRV), 99 to 139 (EHHS…LDVF), 140 to 180 (AHED…HGEP), 185 to 225 (NYPS…SSLL), 277 to 317 (FNSC…EAGG), and 331 to 370 (GHRS…GCTG). Disordered stretches follow at residues 449-478 (GVSE…ESAD) and 490-509 (TTNT…AASR). The span at 454–465 (SGYTDSESSASL) shows a compositional bias: polar residues. Residue T500 is modified to Phosphothreonine. A phosphoserine mark is found at S531, S533, S626, S628, S645, S648, and S651. 3 disordered regions span residues 544-655 (TDLF…DIES), 676-824 (NNKD…EERS), and 889-942 (ACET…KLKT). A compositionally biased stretch (low complexity) spans 625-641 (LSSSPTSSPERSTSTLE). Basic and acidic residues-rich tracts occupy residues 690-701 (DEGRAGTSHKDN) and 728-738 (CSKDTFKEETP). Positions 760-770 (GTSQDTGNSGS) are enriched in polar residues. S794 is subject to Phosphoserine. Positions 801-815 (SGSTLNSGSGNCPRT) are enriched in polar residues.

Interacts with DDB1, CUL4A or CUL4B. Interacts with L3MBTL3. Interacts with DNMT1. Interacts with E2F1. Interacts with SOX2. In terms of tissue distribution, ubiquitous.

It functions in the pathway protein modification; protein ubiquitination. Its function is as follows. Is a substrate receptor for the CUL4-DDB1 E3 ubiquitin-protein ligase complex (CRL4). The complex CRL4-DCAF5 is involved in the ubiquitination of a set of methylated non-histone proteins, including SOX2, DNMT1 and E2F1. This Homo sapiens (Human) protein is DDB1- and CUL4-associated factor 5 (DCAF5).